The following is a 99-amino-acid chain: uncharacterized protein (99 aa).

Residues 10-29 (ELSVHTGTVTHTIFVYVFLG) form a helical membrane-spanning segment.

The protein resides in the membrane. This is an uncharacterized protein from Schizosaccharomyces pombe (strain 972 / ATCC 24843) (Fission yeast).